The primary structure comprises 258 residues: UPF0246 protein YaaA (258 aa).

Belongs to the UPF0246 family.

This Escherichia coli (strain K12 / MC4100 / BW2952) protein is UPF0246 protein YaaA.